We begin with the raw amino-acid sequence, 322 residues long: MIKAGIIGGAGYTAGELIRLLINHPDVDIKFINSSSNAGNKITDVHEGLYGETDLVFTDELPLDEIDVLFFCTAHGDTKKFMDSHNVPEDLKIIDLSMDYRIKSDDHDFIYGLPELNRRAICHSKHVANPGCFATCIQLGLLPLAKHLLLNEDIMVNAITGSTGAGVKPGATSHFSWRNNNMSIYKPFSHQHVPEIKQSLKQLQNSFNAEIDFIPYRGDFPRGIFATLVVKCKVELEELVKMYQDYYAEDSFVHIVDKNIDLKQVVNTNKCLIHLEKHGDKLLVISCIDNLLKGASGQAVHNMNLMFNLEETVGLRLKPSAF.

Cysteine 132 is a catalytic residue.

This sequence belongs to the NAGSA dehydrogenase family. Type 1 subfamily.

It is found in the cytoplasm. It carries out the reaction N-acetyl-L-glutamate 5-semialdehyde + phosphate + NADP(+) = N-acetyl-L-glutamyl 5-phosphate + NADPH + H(+). The protein operates within amino-acid biosynthesis; L-arginine biosynthesis; N(2)-acetyl-L-ornithine from L-glutamate: step 3/4. Catalyzes the NADPH-dependent reduction of N-acetyl-5-glutamyl phosphate to yield N-acetyl-L-glutamate 5-semialdehyde. The protein is N-acetyl-gamma-glutamyl-phosphate reductase of Phocaeicola vulgatus (strain ATCC 8482 / DSM 1447 / JCM 5826 / CCUG 4940 / NBRC 14291 / NCTC 11154) (Bacteroides vulgatus).